An 830-amino-acid polypeptide reads, in one-letter code: P-selectin (830 aa).

Residues 1–41 (MANCQIAILYQRFQRVVFGISQLLCFSALISELTNQKEVAA) form the signal peptide. The Extracellular portion of the chain corresponds to 42–771 (WTYHYSTKAY…QAGPLTIQEA (730 aa)). N-linked (GlcNAc...) asparagine glycosylation is found at N54 and N98. In terms of domain architecture, C-type lectin spans 58–158 (KYCQNRYTDL…HCLKKKHALC (101 aa)). Intrachain disulfides connect C60–C158, C131–C150, C163–C174, C168–C183, C185–C194, C200–C244, C230–C257, C262–C306, C292–C319, C324–C368, C354–C381, C386–C430, C416–C443, C448–C492, C478–C505, C510–C554, C540–C567, C572–C616, C602–C629, C642–C686, C672–C699, C704–C748, and C734–C761. Residues E121, N123, and N124 each coordinate Ca(2+). N123 is a binding site for a carbohydrate. Residues E133 and N146 each contribute to the a carbohydrate site. Ca(2+)-binding residues include N146 and D147. The EGF-like domain maps to 159–195 (YTASCQDMSCSKQGECLETIGNYTCSCYPGFYGPECE). N-linked (GlcNAc...) asparagine glycosylation occurs at N180. Sushi domains are found at residues 198–259 (RECG…QCLA), 260–321 (AQCP…VCKA), 322–383 (VQCQ…TCEA), 384–445 (ISCE…VCQA), 446–507 (LQCQ…ECQA), 508–569 (IPCT…MCEA), 570–631 (IKCP…TCKG), 640–701 (VQCP…ACRA), and 702–763 (VKCS…TCQA). N-linked (GlcNAc...) asparagine glycans are attached at residues N212 and N219. N-linked (GlcNAc...) asparagine glycosylation is present at N411. N460 is a glycosylation site (N-linked (GlcNAc...) asparagine). N518 carries an N-linked (GlcNAc...) asparagine glycan. N-linked (GlcNAc...) asparagine glycosylation occurs at N665. N-linked (GlcNAc...) asparagine glycans are attached at residues N716, N723, and N741. A helical transmembrane segment spans residues 772 to 795 (LTYFGGAVASTIGLIMGGTLLALL). The Cytoplasmic segment spans residues 796–830 (RKRFRQKDDGKCPLNPHSHLGTYGVFTNAAFDPSP). C807 is lipidated: S-palmitoyl cysteine; alternate. Residue C807 is the site of S-stearoyl cysteine; alternate attachment. The Endocytosis signal signature appears at 818 to 821 (YGVF). The segment at 821–830 (FTNAAFDPSP) is interaction with SNX17.

It belongs to the selectin/LECAM family. As to quaternary structure, interacts with SNX17. Interacts with SELPLG/PSGL1 and PODXL2 and mediates neutrophil adhesion and leukocyte rolling. This interaction requires the sialyl-Lewis X epitope of SELPLG and PODXL2, and specific tyrosine sulfation on SELPLG. Interacts (via C-type lectin domain) with alpha-IIb/beta3 integrin ITGA2B:ITGB3 and alpha-V/beta-3 integrin ITGAV:ITGB3. Interacts with alpha5/beta1 integrin ITGA5:ITGB1 and alpha4/beta1 integrin ITGA4:ITGB. Stored in the alpha-granules of platelets and Weibel-Palade bodies of endothelial cells. Upon cell activation by agonists, P-selectin is transported rapidly to the cell surface.

It localises to the cell membrane. Its function is as follows. Ca(2+)-dependent receptor for myeloid cells that binds to carbohydrates on neutrophils and monocytes. Mediates the interaction of activated endothelial cells or platelets with leukocytes. The ligand recognized is sialyl-Lewis X. Mediates rapid rolling of leukocyte rolling over vascular surfaces during the initial steps in inflammation through interaction with SELPLG. Mediates cell-cell interactions and cell adhesion via the interaction with integrin alpha-IIb/beta3 (ITGA2B:ITGB3) and integrin alpha-V/beta-3 (ITGAV:ITGB3). This Homo sapiens (Human) protein is P-selectin (SELP).